Reading from the N-terminus, the 323-residue chain is tRNA U34 carboxymethyltransferase (323 aa).

Carboxy-S-adenosyl-L-methionine is bound by residues K91, W105, K110, G130, 152–154 (DPT), 181–182 (IE), M196, Y200, and R315.

This sequence belongs to the class I-like SAM-binding methyltransferase superfamily. CmoB family. Homotetramer.

The enzyme catalyses carboxy-S-adenosyl-L-methionine + 5-hydroxyuridine(34) in tRNA = 5-carboxymethoxyuridine(34) in tRNA + S-adenosyl-L-homocysteine + H(+). In terms of biological role, catalyzes carboxymethyl transfer from carboxy-S-adenosyl-L-methionine (Cx-SAM) to 5-hydroxyuridine (ho5U) to form 5-carboxymethoxyuridine (cmo5U) at position 34 in tRNAs. In Escherichia coli (strain SE11), this protein is tRNA U34 carboxymethyltransferase.